The primary structure comprises 403 residues: Phosphopentomutase 2 (403 aa).

D13, D298, H303, D339, H340, and H351 together coordinate Mn(2+).

This sequence belongs to the phosphopentomutase family. The cofactor is Mn(2+).

The protein resides in the cytoplasm. It carries out the reaction 2-deoxy-alpha-D-ribose 1-phosphate = 2-deoxy-D-ribose 5-phosphate. It catalyses the reaction alpha-D-ribose 1-phosphate = D-ribose 5-phosphate. The protein operates within carbohydrate degradation; 2-deoxy-D-ribose 1-phosphate degradation; D-glyceraldehyde 3-phosphate and acetaldehyde from 2-deoxy-alpha-D-ribose 1-phosphate: step 1/2. Isomerase that catalyzes the conversion of deoxy-ribose 1-phosphate (dRib-1-P) and ribose 1-phosphate (Rib-1-P) to deoxy-ribose 5-phosphate (dRib-5-P) and ribose 5-phosphate (Rib-5-P), respectively. This Streptococcus agalactiae serotype Ia (strain ATCC 27591 / A909 / CDC SS700) protein is Phosphopentomutase 2.